Consider the following 180-residue polypeptide: Large ribosomal subunit protein uL5 (180 aa).

It belongs to the universal ribosomal protein uL5 family. In terms of assembly, part of the 50S ribosomal subunit; part of the 5S rRNA/L5/L18/L25 subcomplex. Contacts the 5S rRNA and the P site tRNA. Forms a bridge to the 30S subunit in the 70S ribosome.

Functionally, this is one of the proteins that bind and probably mediate the attachment of the 5S RNA into the large ribosomal subunit, where it forms part of the central protuberance. In the 70S ribosome it contacts protein S13 of the 30S subunit (bridge B1b), connecting the 2 subunits; this bridge is implicated in subunit movement. Contacts the P site tRNA; the 5S rRNA and some of its associated proteins might help stabilize positioning of ribosome-bound tRNAs. This chain is Large ribosomal subunit protein uL5, found in Leuconostoc citreum (strain KM20).